The sequence spans 292 residues: 2-(5''-triphosphoribosyl)-3'-dephosphocoenzyme-A synthase (292 aa).

This sequence belongs to the CitG/MdcB family.

The catalysed reaction is 3'-dephospho-CoA + ATP = 2'-(5''-triphospho-alpha-D-ribosyl)-3'-dephospho-CoA + adenine. In terms of biological role, catalyzes the formation of 2-(5''-triphosphoribosyl)-3'-dephosphocoenzyme-A, the precursor of the prosthetic group of the holo-acyl carrier protein (gamma chain) of citrate lyase, from ATP and dephospho-CoA. The chain is 2-(5''-triphosphoribosyl)-3'-dephosphocoenzyme-A synthase from Escherichia coli O6:K15:H31 (strain 536 / UPEC).